We begin with the raw amino-acid sequence, 1376 residues long: Zinc finger MYM-type protein 2 (1376 aa).

Positions 30–53 (NVGNSFSGPPNPLVSRSSKFQNSS) are enriched in polar residues. 2 disordered regions span residues 30–56 (NVGN…SVED) and 85–158 (TSSK…FSSS). Residues K48, K88, K98, and K104 each participate in a glycyl lysine isopeptide (Lys-Gly) (interchain with G-Cter in SUMO2) cross-link. A compositionally biased stretch (polar residues) spans 127-138 (TNQGQEKSSSNF). The segment covering 139–152 (IERRPSETKNRTND) has biased composition (basic and acidic residues). Glycyl lysine isopeptide (Lys-Gly) (interchain with G-Cter in SUMO2) cross-links involve residues K147, K253, and K297. Residues 269-304 (DVFQNGESAPHHNPDSWISQSASFPRNQKQQGVDSL) are disordered. Polar residues predominate over residues 284-302 (SWISQSASFPRNQKQQGVD). S305 bears the Phosphoserine mark. Glycyl lysine isopeptide (Lys-Gly) (interchain with G-Cter in SUMO2) cross-links involve residues K312, K324, K347, and K365. The MYM-type 1 zinc-finger motif lies at 326–362 (VKVTCANCKKPLQKGQTAYQRKGSAHLFCSTTCLSSF). An MYM-type 2 zinc finger spans residues 368–408 (PKKLCVMCKKDITTMKGTIVAQVDSSESFQEFCSTSCLSLY). Residues K416, K440, K490, K502, K512, K528, and K531 each participate in a glycyl lysine isopeptide (Lys-Gly) (interchain with G-Cter in SUMO2) cross-link. 2 consecutive MYM-type zinc fingers follow at residues 420-455 (NKSR…FNRY) and 462-501 (IMNC…VTEY). The MYM-type 5 zinc finger occupies 532–569 (LTTCTGCRTQCRFFDMTQCIGPNGYMEPYCSTACMNSH). Residues K575, K602, K648, K657, K687, K699, and K708 each participate in a glycyl lysine isopeptide (Lys-Gly) (interchain with G-Cter in SUMO2) cross-link. Residues 635 to 670 (QLKCNYCKNSFCSKPEILEWENKVHQFCSKTCSDDY) form an MYM-type 6 zinc finger. 2 consecutive MYM-type zinc fingers follow at residues 722 to 757 (RCVT…CKKF) and 763 to 798 (KAAR…LLRF). Glycyl lysine isopeptide (Lys-Gly) (interchain with G-Cter in SUMO2) cross-links involve residues K763, K787, K811, and K828. S837 is modified (phosphoserine). The interval 1027-1063 (VFGEEYEEQPRPRSKKKGTKRKAVSGYQSHDDSSDNS) is disordered. A compositionally biased stretch (basic residues) spans 1038-1049 (PRSKKKGTKRKA). The residue at position 1063 (S1063) is a Phosphoserine. T1375 carries the post-translational modification Phosphothreonine.

Can form homodimers. May be a component of a BHC histone deacetylase complex that contains HDAC1, HDAC2, HMG20B/BRAF35, KDM1A, RCOR1/CoREST, PHF21A/BHC80, ZMYM2, ZNF217, ZMYM3, GSE1 and GTF2I. Interacts with FOXP1 and FOXP2. In terms of tissue distribution, low but widespread expression is detected in the developing kidney.

It localises to the nucleus. Its function is as follows. Involved in the negative regulation of transcription. In Mus musculus (Mouse), this protein is Zinc finger MYM-type protein 2 (Zmym2).